The primary structure comprises 84 residues: NADH-ubiquinone oxidoreductase chain 4L (84 aa).

The next 2 membrane-spanning stretches (helical) occupy residues 7–29 (ILLL…EILL) and 50–70 (IFSI…LSIL).

The protein belongs to the complex I subunit 4L family.

The protein resides in the mitochondrion membrane. The catalysed reaction is a ubiquinone + NADH + 5 H(+)(in) = a ubiquinol + NAD(+) + 4 H(+)(out). Functionally, core subunit of the mitochondrial membrane respiratory chain NADH dehydrogenase (Complex I) that is believed to belong to the minimal assembly required for catalysis. Complex I functions in the transfer of electrons from NADH to the respiratory chain. The immediate electron acceptor for the enzyme is believed to be ubiquinone. This chain is NADH-ubiquinone oxidoreductase chain 4L (ND4L), found in Candida parapsilosis (Yeast).